A 140-amino-acid chain; its full sequence is Transmembrane protein 234 homolog (140 aa).

Helical transmembrane passes span 14–34 (IYAV…NPFI), 64–84 (WQYL…VLTL), 88–108 (ELSL…AITA), and 116–136 (SGWK…ICGL).

This sequence belongs to the TMEM234 family.

The protein resides in the membrane. This chain is Transmembrane protein 234 homolog, found in Anopheles gambiae (African malaria mosquito).